We begin with the raw amino-acid sequence, 390 residues long: Chorismate synthase (390 aa).

An NADP(+)-binding site is contributed by arginine 48. FMN is bound by residues 126-128 (RAS), glycine 286, 301-305 (KPTSS), and arginine 328.

This sequence belongs to the chorismate synthase family. Requires FMNH2 as cofactor.

The catalysed reaction is 5-O-(1-carboxyvinyl)-3-phosphoshikimate = chorismate + phosphate. The protein operates within metabolic intermediate biosynthesis; chorismate biosynthesis; chorismate from D-erythrose 4-phosphate and phosphoenolpyruvate: step 7/7. In terms of biological role, catalyzes the anti-1,4-elimination of the C-3 phosphate and the C-6 proR hydrogen from 5-enolpyruvylshikimate-3-phosphate (EPSP) to yield chorismate, which is the branch point compound that serves as the starting substrate for the three terminal pathways of aromatic amino acid biosynthesis. This reaction introduces a second double bond into the aromatic ring system. The sequence is that of Chorismate synthase from Sulfurisphaera tokodaii (strain DSM 16993 / JCM 10545 / NBRC 100140 / 7) (Sulfolobus tokodaii).